A 92-amino-acid polypeptide reads, in one-letter code: Small ribosomal subunit protein uS19c (92 aa).

The protein belongs to the universal ribosomal protein uS19 family.

It is found in the plastid. It localises to the chloroplast. Its function is as follows. Protein S19 forms a complex with S13 that binds strongly to the 16S ribosomal RNA. The polypeptide is Small ribosomal subunit protein uS19c (Angiopteris evecta (Mule's foot fern)).